The sequence spans 458 residues: Fumarate hydratase class II 2 (458 aa).

Residues 98-100, 123-126, 133-135, and Thr181 contribute to the substrate site; these read SGT, NPND, and SSN. His182 serves as the catalytic Proton donor/acceptor. Ser312 is an active-site residue. Residues Ser313 and 318 to 320 contribute to the substrate site; that span reads KVN.

It belongs to the class-II fumarase/aspartase family. Fumarase subfamily. In terms of assembly, homotetramer.

Its subcellular location is the cytoplasm. The enzyme catalyses (S)-malate = fumarate + H2O. Its pathway is carbohydrate metabolism; tricarboxylic acid cycle; (S)-malate from fumarate: step 1/1. Involved in the TCA cycle. Catalyzes the stereospecific interconversion of fumarate to L-malate. This is Fumarate hydratase class II 2 from Pseudomonas aeruginosa (strain ATCC 15692 / DSM 22644 / CIP 104116 / JCM 14847 / LMG 12228 / 1C / PRS 101 / PAO1).